A 139-amino-acid polypeptide reads, in one-letter code: Acidic phospholipase A2 H1E6 (139 aa).

Positions 1-16 are cleaved as a signal peptide; the sequence is MRTLWILAVLQVGVEG. 7 disulfide bridges follow: Cys42–Cys132, Cys44–Cys60, Cys59–Cys111, Cys65–Cys139, Cys66–Cys104, Cys73–Cys97, and Cys91–Cys102. Ca(2+) is bound by residues Tyr43, Gly45, and Gly47. The active site involves His63. Asp64 is a binding site for Ca(2+). The active site involves Asp105.

As to quaternary structure, homodimer. It depends on Ca(2+) as a cofactor. As to expression, expressed by the venom gland.

It is found in the secreted. The enzyme catalyses a 1,2-diacyl-sn-glycero-3-phosphocholine + H2O = a 1-acyl-sn-glycero-3-phosphocholine + a fatty acid + H(+). Its function is as follows. Snake venom phospholipase A2 (PLA2) that inhibits ADP-induced platelet aggregation. PLA2 catalyzes the calcium-dependent hydrolysis of the 2-acyl groups in 3-sn-phosphoglycerides. This is Acidic phospholipase A2 H1E6 from Calloselasma rhodostoma (Malayan pit viper).